Here is a 214-residue protein sequence, read N- to C-terminus: Probable nicotinate-nucleotide adenylyltransferase (214 aa).

Belongs to the NadD family.

The enzyme catalyses nicotinate beta-D-ribonucleotide + ATP + H(+) = deamido-NAD(+) + diphosphate. It functions in the pathway cofactor biosynthesis; NAD(+) biosynthesis; deamido-NAD(+) from nicotinate D-ribonucleotide: step 1/1. Catalyzes the reversible adenylation of nicotinate mononucleotide (NaMN) to nicotinic acid adenine dinucleotide (NaAD). The sequence is that of Probable nicotinate-nucleotide adenylyltransferase from Mycobacterium bovis (strain ATCC BAA-935 / AF2122/97).